Here is a 401-residue protein sequence, read N- to C-terminus: Mannan endo-1,4-beta-mannosidase 3 (401 aa).

The first 24 residues, 1–24 (MSYTHRRSCISGLFLLLLALSCEA), serve as a signal peptide directing secretion. The substrate site is built by W84 and N198. E199 serves as the catalytic Proton donor. Substrate is bound at residue Y277. The Nucleophile role is filled by E317. Residue W356 coordinates substrate.

It belongs to the glycosyl hydrolase 5 (cellulase A) family.

It is found in the secreted. The catalysed reaction is Random hydrolysis of (1-&gt;4)-beta-D-mannosidic linkages in mannans, galactomannans and glucomannans.. This chain is Mannan endo-1,4-beta-mannosidase 3 (MAN3), found in Solanum lycopersicum (Tomato).